The sequence spans 147 residues: Hemoglobin subunit beta (147 aa).

The Globin domain occupies 3–147 (EWTDKERSII…VVSALGKQYH (145 aa)). Heme b contacts are provided by H64 and H93.

Belongs to the globin family. Heterotetramer of two alpha chains and two beta chains. In terms of tissue distribution, red blood cells.

Functionally, involved in oxygen transport from gills to the various peripheral tissues. The polypeptide is Hemoglobin subunit beta (hbb) (Trematomus hansoni (Striped rockcod)).